The chain runs to 419 residues: Transcription termination factor Rho (419 aa).

The Rho RNA-BD domain occupies 48-123 (GFTCSGTLEI…VRLDSINGDH (76 aa)). Residues 169 to 174 (GKGQRA), 181 to 186 (KIGKTV), and Arg212 contribute to the ATP site.

This sequence belongs to the Rho family. As to quaternary structure, homohexamer. The homohexamer assembles into an open ring structure.

In terms of biological role, facilitates transcription termination by a mechanism that involves Rho binding to the nascent RNA, activation of Rho's RNA-dependent ATPase activity, and release of the mRNA from the DNA template. This Neisseria gonorrhoeae protein is Transcription termination factor Rho.